The following is a 312-amino-acid chain: Methionyl-tRNA formyltransferase (312 aa).

(6S)-5,6,7,8-tetrahydrofolate is bound at residue 109–112; that stretch reads SLLP.

Belongs to the Fmt family.

It carries out the reaction L-methionyl-tRNA(fMet) + (6R)-10-formyltetrahydrofolate = N-formyl-L-methionyl-tRNA(fMet) + (6S)-5,6,7,8-tetrahydrofolate + H(+). Attaches a formyl group to the free amino group of methionyl-tRNA(fMet). The formyl group appears to play a dual role in the initiator identity of N-formylmethionyl-tRNA by promoting its recognition by IF2 and preventing the misappropriation of this tRNA by the elongation apparatus. This Listeria monocytogenes serovar 1/2a (strain ATCC BAA-679 / EGD-e) protein is Methionyl-tRNA formyltransferase.